Consider the following 256-residue polypeptide: Membrane-anchored junction protein (256 aa).

The Nuclear portion of the chain corresponds to 1–232 (MSLKPFTYPF…HSSPPPPKEP (232 aa)). Disordered stretches follow at residues 143-197 (KRKL…TPAS) and 211-235 (HGLQ…PGAR). Over residues 164 to 173 (ETSSEASSNK) the composition is skewed to polar residues. Residues 175-184 (PLKESKRSTD) are compositionally biased toward basic and acidic residues. A helical membrane pass occupies residues 233-251 (GARGFLGFLSALFPFRYFF). Over 252 to 256 (KKSGQ) the chain is Perinuclear space.

This sequence belongs to the MAJIN family. In terms of assembly, component of the MAJIN-TERB1-TERB2 complex, composed of MAJIN, TERB1 and TERB2. As to expression, specifically expressed in germline tissues.

Its subcellular location is the nucleus inner membrane. The protein localises to the chromosome. It is found in the telomere. Its function is as follows. Meiosis-specific telomere-associated protein involved in meiotic telomere attachment to the nucleus inner membrane, a crucial step for homologous pairing and synapsis. Component of the MAJIN-TERB1-TERB2 complex, which promotes telomere cap exchange by mediating attachment of telomeric DNA to the inner nuclear membrane and replacement of the protective cap of telomeric chromosomes: in early meiosis, the MAJIN-TERB1-TERB2 complex associates with telomeric DNA and the shelterin/telosome complex. During prophase, the complex matures and promotes release of the shelterin/telosome complex from telomeric DNA. In the complex, MAJIN acts as the anchoring subunit to the nucleus inner membrane. MAJIN shows DNA-binding activity, possibly for the stabilization of telomere attachment on the nucleus inner membrane. In Mus musculus (Mouse), this protein is Membrane-anchored junction protein.